The chain runs to 430 residues: MAERVLDKLDILDEQAKTLLATRAKKNCLQSQVKRKISVIPLTFDFQLELEKDIATSISKTNSKITKDRSYGTKKPKRYVSFKNMPEPKKSDFQNSNLRPPFLPTNIKTQEIKSIEPVEEYLKSRSIRSFHYLKDIPETEYAKPFQELYSQHRHQCRRTLCSTVFSSVPSNQSHAYKKEDSIYSTKENESIRNDQLNEYSVRQKSLLPLCFEDELIKPDAKIIDIGLVKTVTSHTGKNDTNPIMFHEAGYVQMLLLTKNRLPPHFMKNGNGSPYERSNVVLQRNCEMLKSVARDQSITPSKTQRTLPTTQKKDIPAISFKVSDRVVDDKLRKKTRKQTFKNISWDKLYNFSQTFSSLTKKFVGFLDKTVIQEMSAKTGKFEKMFSTVKPVSEFSASPFKYYSKPSRNILKVHKINNVTPLDDLLNLSSKK.

This is an uncharacterized protein from Bos taurus (Bovine).